A 671-amino-acid chain; its full sequence is tRNA(Met) cytidine acetyltransferase TmcA (671 aa).

ATP-binding positions include Gln180, 202–211, and Arg319; that span reads GRGKSALAGQ. An N-acetyltransferase domain is found at 356-531; it reads QTLWQSDPET…SGCYTAMALL (176 aa). Acetyl-CoA contacts are provided by residues 461 to 463, 468 to 474, Glu499, and Arg506; these read IAV and QREGTGR.

Belongs to the RNA cytidine acetyltransferase family. TmcA subfamily.

It localises to the cytoplasm. The catalysed reaction is cytidine(34) in elongator tRNA(Met) + acetyl-CoA + ATP + H2O = N(4)-acetylcytidine(34) in elongator tRNA(Met) + ADP + phosphate + CoA + H(+). The enzyme catalyses 2-hydroxyisobutanoyl-CoA + L-lysyl-[protein] = N(6)-(2-hydroxyisobutanoyl)-L-lysyl-[protein] + CoA + H(+). Its activity is regulated as follows. ATP/GTP hydrolysis is stimulated by the addition of acetyl-CoA and tRNA(Met). Binding of acetyl-CoA to TmcA activates both ATPase and tRNA-binding activities. ATP promotes the 2-hydroxyisobutyryltransferase activity. In terms of biological role, catalyzes the formation of N(4)-acetylcytidine (ac(4)C) at the wobble position of tRNA(Met), by using acetyl-CoA as an acetyl donor and ATP (or GTP). It recognizes the wobble base of tRNA(Met), thus distinguishing between tRNA(Met) and the structurally similar tRNA(Ile2). Could use an RNA helicase motor driven by ATP hydrolysis to deliver the wobble base of tRNA(Met) to the acetyltransferase domain of TmcA. Functionally, also functions as a lysine 2-hydroxyisobutyryltransferase to regulate transcription. Can specifically catalyze the 2-hydroxyisobutyrylation (Khib) of the DNA-binding protein H-NS. Hydroxyisobutyrylation of H-NS decreases its DNA-binding activity, promotes the expression of acid-resistance genes and enhances bacterial survival under extreme acid stress. This chain is tRNA(Met) cytidine acetyltransferase TmcA, found in Escherichia coli (strain K12).